Here is a 573-residue protein sequence, read N- to C-terminus: Septation ring formation regulator EzrA (573 aa).

Residues 1–2 lie on the Extracellular side of the membrane; it reads MQ. The helical transmembrane segment at 3–21 threads the bilayer; sequence VAIGIVVVAIVIYAAVKGF. Topologically, residues 22–573 are cytoplasmic; it reads QFYIDKQVRQ…KQADKMNDEA (552 aa). Coiled coils occupy residues 100–188, 317–364, and 416–488; these read DAQQ…LAKA, LTHA…VYQA, and ETLQ…TLKE.

Belongs to the EzrA family.

The protein resides in the cell membrane. Functionally, negative regulator of FtsZ ring formation; modulates the frequency and position of FtsZ ring formation. Inhibits FtsZ ring formation at polar sites. Interacts either with FtsZ or with one of its binding partners to promote depolymerization. In Lactiplantibacillus plantarum (strain ATCC BAA-793 / NCIMB 8826 / WCFS1) (Lactobacillus plantarum), this protein is Septation ring formation regulator EzrA.